The following is a 129-amino-acid chain: Small ribosomal subunit protein uS9 (129 aa).

Belongs to the universal ribosomal protein uS9 family.

The chain is Small ribosomal subunit protein uS9 (rpsI) from Treponema pallidum (strain Nichols).